A 339-amino-acid polypeptide reads, in one-letter code: tRNA dimethylallyltransferase (339 aa).

Position 36 to 43 (36 to 43 (GPTGSGKT)) interacts with ATP. 38 to 43 (TGSGKT) lines the substrate pocket. An interaction with substrate tRNA region spans residues 61 to 64 (DSMQ).

It belongs to the IPP transferase family. Monomer. Mg(2+) serves as cofactor.

It carries out the reaction adenosine(37) in tRNA + dimethylallyl diphosphate = N(6)-dimethylallyladenosine(37) in tRNA + diphosphate. In terms of biological role, catalyzes the transfer of a dimethylallyl group onto the adenine at position 37 in tRNAs that read codons beginning with uridine, leading to the formation of N6-(dimethylallyl)adenosine (i(6)A). This chain is tRNA dimethylallyltransferase, found in Chlamydia trachomatis serovar A (strain ATCC VR-571B / DSM 19440 / HAR-13).